Consider the following 71-residue polypeptide: General transcription and DNA repair factor IIH subunit TFB5 (71 aa).

The protein belongs to the TFB5 family. Component of the 7-subunit TFIIH core complex.

The protein localises to the nucleus. It is found in the chromosome. Its function is as follows. Component of the general transcription and DNA repair factor IIH (TFIIH) core complex, which is involved in general and transcription-coupled nucleotide excision repair (NER) of damaged DNA and in RNA transcription by RNA polymerase II. In NER, TFIIH acts by opening DNA around the lesion to allow the excision of the damaged oligonucleotide and its replacement by a new DNA fragment. In transcription, TFIIH has an essential role in transcription initiation. When the pre-initiation complex (PIC) has been established, TFIIH is required for promoter opening and promoter escape. Necessary for the stability of the TFIIH complex and for the presence of normal levels of TFIIH in the cell. Required for efficient binding of TFIIH to damaged DNA. Dispensable for normal development, but required when transcription is challenged. This Caenorhabditis elegans protein is General transcription and DNA repair factor IIH subunit TFB5.